The chain runs to 138 residues: ATP synthase epsilon chain, chloroplastic (138 aa).

This sequence belongs to the ATPase epsilon chain family. In terms of assembly, F-type ATPases have 2 components, CF(1) - the catalytic core - and CF(0) - the membrane proton channel. CF(1) has five subunits: alpha(3), beta(3), gamma(1), delta(1), epsilon(1). CF(0) has three main subunits: a, b and c.

The protein localises to the plastid. Its subcellular location is the chloroplast thylakoid membrane. Produces ATP from ADP in the presence of a proton gradient across the membrane. The chain is ATP synthase epsilon chain, chloroplastic from Anthoceros angustus (Hornwort).